Here is a 211-residue protein sequence, read N- to C-terminus: MITGKLITVEGPDGAGKTTVLEQLIPLLKQKVAQEILTTREPGGVAISEYIRELILDINHTTMDPKTELLLYIAARRQHLVEKVLPALEAGQLVFIDRFIDSSVAYQGAGRGLIKADIQWLNEFATDGLEPDLTLYFDVPSEIGLARINANQQREVNRLDLETIEIHQRVRKGYLALAKEHPKRIVTIDATKPLKEVVSVALEHVLTLLLA.

11 to 18 (GPDGAGKT) lines the ATP pocket.

It belongs to the thymidylate kinase family.

It carries out the reaction dTMP + ATP = dTDP + ADP. Functionally, phosphorylation of dTMP to form dTDP in both de novo and salvage pathways of dTTP synthesis. In Streptococcus pyogenes serotype M3 (strain ATCC BAA-595 / MGAS315), this protein is Thymidylate kinase.